The sequence spans 94 residues: Integration host factor subunit beta (94 aa).

The protein belongs to the bacterial histone-like protein family. Heterodimer of an alpha and a beta chain.

In terms of biological role, this protein is one of the two subunits of integration host factor, a specific DNA-binding protein that functions in genetic recombination as well as in transcriptional and translational control. This is Integration host factor subunit beta (ihfB) from Dickeya dadantii (strain 3937) (Erwinia chrysanthemi (strain 3937)).